Here is a 477-residue protein sequence, read N- to C-terminus: MKHAIHHIHFVGIGGAGMSGIAEVLHNLGYAISGSDLSDSATLRRLAGLGIATHVGHAAAHIEGADAVVTSTAVQSDNPEVLAARERKIPVVPRALMLAELMRFKQGIAIAGAHGKTTTTSLVTSVLAEAGLDPTFVIGGKLNSAGANAKLGQGDYIVVEADESDASFLNLLPVMAVVTNIDADHMETYGHDFGRLKGAFVDFLHRMPFYGRAIVCVDSPAVREILPQVARPVTTYGFAEDAQVRALNVRAEAGSMHFTVRRSNGQSYPDLDVVLSLPGEHNVLNALSAVAVAMELEISDDALLRAFESFKGVGRRFQRYGELAAADGGSFTVIDDYGHHPVEMAATLAAARGAFPGRRLVLAFQPHRYSRTRDCFEDFVKVIGLADAVLLTEVYAAGEAPVVAADGRSLARALRVAGRVEPVFVENVAELPAAIAVNARDGDVLLCMGAGSIGAVPGKLVEMLQKQELQAQQGAAQ.

112–118 provides a ligand contact to ATP; that stretch reads GAHGKTT.

This sequence belongs to the MurCDEF family.

The protein resides in the cytoplasm. The enzyme catalyses UDP-N-acetyl-alpha-D-muramate + L-alanine + ATP = UDP-N-acetyl-alpha-D-muramoyl-L-alanine + ADP + phosphate + H(+). It participates in cell wall biogenesis; peptidoglycan biosynthesis. Functionally, cell wall formation. This chain is UDP-N-acetylmuramate--L-alanine ligase, found in Delftia acidovorans (strain DSM 14801 / SPH-1).